Here is a 36-residue protein sequence, read N- to C-terminus: Conotoxin Bu21 (36 aa).

A propeptide spanning residues 1 to 21 (DGANAEATDNKPGVFERDEKK) is cleaved from the precursor. 2 cysteine pairs are disulfide-bonded: Cys-22-Cys-28 and Cys-23-Cys-34.

It belongs to the conotoxin A superfamily. As to expression, expressed by the venom duct.

The protein resides in the secreted. The polypeptide is Conotoxin Bu21 (Conus bullatus (Bubble cone)).